A 608-amino-acid polypeptide reads, in one-letter code: Serine/threonine-protein kinase ROP17 (608 aa).

Positions 1-21 are cleaved as a signal peptide; the sequence is MELVLCFVIITISGVIRESSA. Asn76 carries an N-linked (GlcNAc...) asparagine glycan. Residues 283–579 form the Protein kinase domain; sequence LKKRGFLGGG…QQALEQFSLL (297 aa). ATP is bound by residues 289 to 297 and Lys312; that span reads LGGGGFGLV. Asp436 functions as the Proton acceptor in the catalytic mechanism.

This sequence belongs to the protein kinase superfamily. Ser/Thr protein kinase family. In terms of assembly, interacts with ROP5; interaction with ROP5 does not affect kinase activity. Interacts with human BCL2; the interaction probably promotes BCL2 phosphorylation and degradation.

The protein localises to the secreted. Its subcellular location is the cytoplasmic vesicle. It localises to the secretory vesicle. It is found in the rhoptry. The protein resides in the parasitophorous vacuole membrane. It catalyses the reaction L-threonyl-[protein] + ATP = O-phospho-L-threonyl-[protein] + ADP + H(+). The catalysed reaction is L-seryl-[protein] + ATP = O-phospho-L-seryl-[protein] + ADP + H(+). Its function is as follows. Protein kinase. Virulence factor. Promotes migration of Toxoplasma-infected macrophages through collagen matrix, facilitating parasite transport through tissues and systemic dissemination. Plays a role in the translocation of dense granule effectors, such as GRA16 and GRA24, across the parasitophorous vacuole membrane in Toxoplasma-infected host cells. Phosphorylates mouse IRGB6 (TGTP1/TGTP2), an immunity-related GTPase (IRG) that protects mice from infection by certain intracellular pathogens; the phosphorylation leads to the disassembly of IRGB6 polymers into monomers and dimers. May modulate gene expression in human cells. Promotes autophagy in human cells via modulation of the BCL2-BECN1 pathway. The polypeptide is Serine/threonine-protein kinase ROP17 (Toxoplasma gondii).